A 67-amino-acid polypeptide reads, in one-letter code: Large ribosomal subunit protein bL35 (67 aa).

This sequence belongs to the bacterial ribosomal protein bL35 family.

This chain is Large ribosomal subunit protein bL35, found in Sphingopyxis alaskensis (strain DSM 13593 / LMG 18877 / RB2256) (Sphingomonas alaskensis).